Consider the following 129-residue polypeptide: Follitropin subunit beta (129 aa).

A signal peptide spans 1–18 (MKTVQFCFLFCCWKAICC). 6 cysteine pairs are disulfide-bonded: C21–C69, C35–C84, C38–C122, C46–C100, C50–C102, and C105–C112. N-linked (GlcNAc...) asparagine glycosylation is found at N25 and N42.

This sequence belongs to the glycoprotein hormones subunit beta family. Heterodimer. The active follitropin is a heterodimer composed of an alpha chain/CGA shared with other hormones and a unique beta chain/FSHB shown here.

Its subcellular location is the secreted. In terms of biological role, together with the alpha chain CGA constitutes follitropin, the follicle-stimulating hormone, and provides its biological specificity to the hormone heterodimer. Binds FSHR, a G protein-coupled receptor, on target cells to activate downstream signaling pathways. Follitropin is involved in follicle development and spermatogenesis in reproductive organs. This chain is Follitropin subunit beta (FSHB), found in Macaca fascicularis (Crab-eating macaque).